The primary structure comprises 210 residues: Small ribosomal subunit protein eS8y (210 aa).

A disordered region spans residues 1 to 22 (MGISRDSIHKRRATGGKQKMWR). Residues 8 to 22 (IHKRRATGGKQKMWR) show a composition bias toward basic residues.

This sequence belongs to the eukaryotic ribosomal protein eS8 family.

In Arabidopsis thaliana (Mouse-ear cress), this protein is Small ribosomal subunit protein eS8y (RPS8B).